Reading from the N-terminus, the 1123-residue chain is Leucine--tRNA ligase, cytoplasmic (1123 aa).

A 'HIGH' region motif is present at residues 84–94 (PYMNGRLHAGH). A 'KMSKS' region motif is present at residues 757–761 (KMSKS). K760 contributes to the ATP binding site.

It belongs to the class-I aminoacyl-tRNA synthetase family.

Its subcellular location is the cytoplasm. It carries out the reaction tRNA(Leu) + L-leucine + ATP = L-leucyl-tRNA(Leu) + AMP + diphosphate. The sequence is that of Leucine--tRNA ligase, cytoplasmic (leu-6) from Neurospora crassa (strain ATCC 24698 / 74-OR23-1A / CBS 708.71 / DSM 1257 / FGSC 987).